A 174-amino-acid polypeptide reads, in one-letter code: Major allergen Can f 1 (174 aa).

A signal peptide spans 1-18 (MKTLLLTIGFSLIAILQA). Cysteine 78 and cysteine 169 are joined by a disulfide. An N-linked (GlcNAc...) asparagine glycan is attached at asparagine 80.

It belongs to the calycin superfamily. Lipocalin family. In terms of tissue distribution, tongue epithelial tissue.

The protein resides in the secreted. This chain is Major allergen Can f 1, found in Canis lupus familiaris (Dog).